Consider the following 289-residue polypeptide: Diaminopimelate epimerase (289 aa).

Substrate contacts are provided by Asn-13, Gln-47, and Asn-67. The active-site Proton donor is Cys-76. Substrate-binding positions include 77–78 (GN), Asn-167, Asn-200, and 218–219 (ER). Cys-227 functions as the Proton acceptor in the catalytic mechanism. 228-229 (GT) is a binding site for substrate.

The protein belongs to the diaminopimelate epimerase family. As to quaternary structure, homodimer.

It is found in the cytoplasm. It catalyses the reaction (2S,6S)-2,6-diaminopimelate = meso-2,6-diaminopimelate. It functions in the pathway amino-acid biosynthesis; L-lysine biosynthesis via DAP pathway; DL-2,6-diaminopimelate from LL-2,6-diaminopimelate: step 1/1. In terms of biological role, catalyzes the stereoinversion of LL-2,6-diaminopimelate (L,L-DAP) to meso-diaminopimelate (meso-DAP), a precursor of L-lysine and an essential component of the bacterial peptidoglycan. The protein is Diaminopimelate epimerase of Burkholderia pseudomallei (strain K96243).